A 469-amino-acid chain; its full sequence is Argininosuccinate lyase (469 aa).

This sequence belongs to the lyase 1 family. Argininosuccinate lyase subfamily.

It is found in the cytoplasm. It catalyses the reaction 2-(N(omega)-L-arginino)succinate = fumarate + L-arginine. It participates in amino-acid biosynthesis; L-arginine biosynthesis; L-arginine from L-ornithine and carbamoyl phosphate: step 3/3. The protein is Argininosuccinate lyase of Burkholderia orbicola (strain MC0-3).